The primary structure comprises 327 residues: Glycerol-3-phosphate dehydrogenase [NAD(P)+] (327 aa).

NADPH is bound by residues serine 10, phenylalanine 11, arginine 31, and lysine 108. Sn-glycerol 3-phosphate is bound by residues lysine 108, glycine 136, and serine 138. Residue alanine 140 participates in NADPH binding. The sn-glycerol 3-phosphate site is built by lysine 191, aspartate 246, serine 256, arginine 257, and asparagine 258. Residue lysine 191 is the Proton acceptor of the active site. NADPH is bound at residue arginine 257. NADPH is bound by residues leucine 281 and glutamate 283.

The protein belongs to the NAD-dependent glycerol-3-phosphate dehydrogenase family.

Its subcellular location is the cytoplasm. It carries out the reaction sn-glycerol 3-phosphate + NAD(+) = dihydroxyacetone phosphate + NADH + H(+). It catalyses the reaction sn-glycerol 3-phosphate + NADP(+) = dihydroxyacetone phosphate + NADPH + H(+). Its pathway is membrane lipid metabolism; glycerophospholipid metabolism. Its function is as follows. Catalyzes the reduction of the glycolytic intermediate dihydroxyacetone phosphate (DHAP) to sn-glycerol 3-phosphate (G3P), the key precursor for phospholipid synthesis. The protein is Glycerol-3-phosphate dehydrogenase [NAD(P)+] of Ehrlichia ruminantium (strain Welgevonden).